A 362-amino-acid polypeptide reads, in one-letter code: 3-isopropylmalate dehydrogenase (362 aa).

Position 78 to 91 (78 to 91) interacts with NAD(+); it reads GPKWETLPPDEQPE. R99, R109, R138, and D227 together coordinate substrate. D227, D251, and D255 together coordinate Mg(2+). 285 to 297 serves as a coordination point for NAD(+); the sequence is GSAPDIAGQGIAN.

It belongs to the isocitrate and isopropylmalate dehydrogenases family. LeuB type 1 subfamily. As to quaternary structure, homodimer. Requires Mg(2+) as cofactor. Mn(2+) is required as a cofactor.

It localises to the cytoplasm. The enzyme catalyses (2R,3S)-3-isopropylmalate + NAD(+) = 4-methyl-2-oxopentanoate + CO2 + NADH. Its pathway is amino-acid biosynthesis; L-leucine biosynthesis; L-leucine from 3-methyl-2-oxobutanoate: step 3/4. Functionally, catalyzes the oxidation of 3-carboxy-2-hydroxy-4-methylpentanoate (3-isopropylmalate) to 3-carboxy-4-methyl-2-oxopentanoate. The product decarboxylates to 4-methyl-2 oxopentanoate. In Geobacter metallireducens (strain ATCC 53774 / DSM 7210 / GS-15), this protein is 3-isopropylmalate dehydrogenase.